A 128-amino-acid chain; its full sequence is uncharacterized protein (128 aa).

Residues 18 to 116 enclose the HTH hxlR-type domain; it reads CPVETTLDII…WGEKYKDRID (99 aa).

This is an uncharacterized protein from Bacillus subtilis (strain 168).